The following is a 271-amino-acid chain: (21S)-21-acetoxyl-apo-melianone synthase SDR (271 aa).

The Proton donor role is filled by S150. Y163 serves as the catalytic Proton acceptor. K167 (proton donor/acceptor) is an active-site residue.

The protein belongs to the short-chain dehydrogenases/reductases (SDR) family. As to expression, mainly expressed in petioles.

The enzyme catalyses 21-O-acetyl-isomeliandiol + A = (21S)-21-acetoxyl-apo-melianone + AH2. It participates in secondary metabolite biosynthesis; terpenoid biosynthesis. Functionally, oxidoreductase involved in the biosynthesis of limonoids triterpene natural products such as azadirachtin, an antifeedant widely used as bioinsecticide, and possessing many medicinal applications including anti-tumoral, anti-malarial, anti-rheumatic, antibacterial, anti-inflammatory, anti-pyretic and diuretic effects. Catalyzes the oxidation of 21-O-acetyl-isomeliandiol to (21S)-21-acetoxyl-apo-melianone. The protein is (21S)-21-acetoxyl-apo-melianone synthase SDR of Melia azedarach (Chinaberry tree).